The chain runs to 735 residues: Two pore calcium channel protein 1B (735 aa).

Residues 1–76 are Cytoplasmic-facing; the sequence is MEEYLLPGES…ELYFMFTRFD (76 aa). Residues 77–97 form a helical membrane-spanning segment; it reads FLWSLNYLALVVLNFFEKPLW. The Extracellular segment spans residues 98–125; the sequence is CSKHLAESCNNRDYYYLGELPFLTGAES. Residues 126 to 146 form a helical membrane-spanning segment; the sequence is LIFEGVTLLLLIIHILFPISY. The Cytoplasmic portion of the chain corresponds to 147-161; the sequence is EGFNLYWRSLLNRLK. Residues 162 to 182 traverse the membrane as a helical segment; sequence VILLLILVADIVVYILLPADF. Tyrosine 183 is a topological domain (extracellular). A helical; Voltage-sensor membrane pass occupies residues 184–202; it reads YLPFRIAPYLRVVFFILNI. Over 203 to 208 the chain is Cytoplasmic; it reads RELRDS. A helical membrane pass occupies residues 209-229; that stretch reads FFILAGMLGTYLNVVALSALF. The Extracellular portion of the chain corresponds to 230–248; the sequence is LLFSSWLAYVFFEDTRQGK. The pore-forming intramembrane region spans 249–263; sequence TTFTSYGTTLYQMFV. Residues 264–286 are Extracellular-facing; sequence LFTTSNNPDVWIPAYKDSRWYCL. A helical membrane pass occupies residues 287 to 307; that stretch reads FFVLYVLLGVYFVTNLILAVV. Residues 308-431 lie on the Cytoplasmic side of the membrane; it reads YDSFKSELVK…ASEKLRGFIR (124 aa). 2 consecutive EF-hand domains span residues 325–360 and 366–401; these read LRLR…LNKY and ISGD…IGLR. A helical membrane pass occupies residues 432 to 452; it reads GATFEYIIVFVLLVNLVAVII. Residues 453–470 are Extracellular-facing; that stretch reads ETTLDIQNNSGQTFWQKV. N-linked (GlcNAc...) asparagine glycosylation occurs at asparagine 460. Residues 471-491 traverse the membrane as a helical segment; the sequence is EFTFGWLYVIEMALKVYTYGF. Over 492–501 the chain is Cytoplasmic; sequence ENYWRDGQNR. The chain crosses the membrane as a helical span at residues 502–522; it reads FDFIVTWVIVIGETTTFVAPD. The Extracellular portion of the chain corresponds to 523 to 531; it reads DLTFLSNGE. Residues 532–549 form a helical; Voltage-sensor membrane-spanning segment; that stretch reads WIRYLLIARMLRLIRLLM. Residues 550 to 560 are Cytoplasmic-facing; that stretch reads HVERYRAFVAT. A helical transmembrane segment spans residues 561–581; it reads FLTLIPSLMPYLGTIFCILCF. Residues 582 to 618 lie on the Extracellular side of the membrane; sequence YCSLGLQIFGGIVNTGNPNLAQTDLAGNDYLLFNFND. The pore-forming intramembrane region spans 619–633; sequence YPNGMVTLFNILVMG. Residues 634–654 are Extracellular-facing; it reads NWQVWMQSYKELTGTSWTYAY. The chain crosses the membrane as a helical span at residues 655-675; it reads FVSFYLISVLWLLNLIVAFVL. At 676-735 the chain is on the cytoplasmic side; sequence EAFQAEMDLEASARCVDGDDKEAKRERRRNVGTKTRSQRVDFLLHHMLRSELTECSNDNP.

Belongs to the calcium channel alpha-1 subunit (TC 1.A.1.11) family. Two pore calcium channel subfamily. As to quaternary structure, homodimer.

Its subcellular location is the membrane. Its activity is regulated as follows. Inhibited by Al(3+), La(3+) and Gd(3+). Up-regulated by H(2)O(2), cryptogein, salicylic acid (SA) and cold shock. Functionally, functions as a voltage-gated inward-rectifying Ca(2+) channel (VDCC) across the plasma membrane that mediates sucrose-induced Ca(2+) influx in autotrophically grown leaf cells. Acts as the major ROS-responsive Ca(2+) channel and is the possible target of Al-dependent inhibition. Plays a regulatory role in defense responses. This is Two pore calcium channel protein 1B (TPC1B) from Nicotiana tabacum (Common tobacco).